The following is a 295-amino-acid chain: Nitrogenase iron protein (295 aa).

Residue 10–17 coordinates ATP; that stretch reads GKGGIGKS. Cys98 is a binding site for [4Fe-4S] cluster. An ADP-ribosylarginine; by dinitrogenase reductase ADP-ribosyltransferase modification is found at Arg101. Cys133 lines the [4Fe-4S] cluster pocket.

This sequence belongs to the NifH/BchL/ChlL family. In terms of assembly, homodimer. [4Fe-4S] cluster is required as a cofactor. In terms of processing, the reversible ADP-ribosylation of Arg-101 inactivates the nitrogenase reductase and regulates nitrogenase activity.

The catalysed reaction is N2 + 8 reduced [2Fe-2S]-[ferredoxin] + 16 ATP + 16 H2O = H2 + 8 oxidized [2Fe-2S]-[ferredoxin] + 2 NH4(+) + 16 ADP + 16 phosphate + 6 H(+). The key enzymatic reactions in nitrogen fixation are catalyzed by the nitrogenase complex, which has 2 components: the iron protein and the molybdenum-iron protein. This Tolumonas auensis (strain DSM 9187 / NBRC 110442 / TA 4) protein is Nitrogenase iron protein.